The primary structure comprises 597 residues: UvrABC system protein C (597 aa).

The region spanning 15-93 (DNPGVYQYYD…IKTLQPRYNV (79 aa)) is the GIY-YIG domain. Residues 207–242 (KESLKDFKKLMNNYAQNLQFEEAQKIKEKIEVLENY) form the UVR domain.

It belongs to the UvrC family. As to quaternary structure, interacts with UvrB in an incision complex.

The protein resides in the cytoplasm. In terms of biological role, the UvrABC repair system catalyzes the recognition and processing of DNA lesions. UvrC both incises the 5' and 3' sides of the lesion. The N-terminal half is responsible for the 3' incision and the C-terminal half is responsible for the 5' incision. This Flavobacterium johnsoniae (strain ATCC 17061 / DSM 2064 / JCM 8514 / BCRC 14874 / CCUG 350202 / NBRC 14942 / NCIMB 11054 / UW101) (Cytophaga johnsonae) protein is UvrABC system protein C.